The chain runs to 359 residues: 3-isopropylmalate dehydrogenase (359 aa).

Residue 76–89 (GPKWDDPSAKTRPE) coordinates NAD(+). Positions 96, 106, 134, and 223 each coordinate substrate. Mg(2+)-binding residues include Asp-223, Asp-247, and Asp-251. 281–293 (GSAPDIAGKSVAN) lines the NAD(+) pocket.

The protein belongs to the isocitrate and isopropylmalate dehydrogenases family. LeuB type 1 subfamily. In terms of assembly, homodimer. Requires Mg(2+) as cofactor. It depends on Mn(2+) as a cofactor.

The protein resides in the cytoplasm. It catalyses the reaction (2R,3S)-3-isopropylmalate + NAD(+) = 4-methyl-2-oxopentanoate + CO2 + NADH. It participates in amino-acid biosynthesis; L-leucine biosynthesis; L-leucine from 3-methyl-2-oxobutanoate: step 3/4. In terms of biological role, catalyzes the oxidation of 3-carboxy-2-hydroxy-4-methylpentanoate (3-isopropylmalate) to 3-carboxy-4-methyl-2-oxopentanoate. The product decarboxylates to 4-methyl-2 oxopentanoate. The protein is 3-isopropylmalate dehydrogenase of Rhodopirellula baltica (strain DSM 10527 / NCIMB 13988 / SH1).